The following is a 307-amino-acid chain: Phospho-N-acetylmuramoyl-pentapeptide-transferase (307 aa).

The next 10 helical transmembrane spans lie at 3–23 (IILF…KYWI), 47–67 (SGTP…FLFF), 71–91 (FFPS…DFKL), 105–125 (IFLS…DYKI), 137–157 (IFYV…INLT), 162–182 (GLAG…NFQF), 186–206 (LTLE…FNSH), 210–230 (IFMG…LSII), 237–257 (LVFL…QVFF), and 285–305 (VVWR…ILWN).

The protein belongs to the glycosyltransferase 4 family. MraY subfamily. Requires Mg(2+) as cofactor.

It is found in the cell inner membrane. The catalysed reaction is UDP-N-acetyl-alpha-D-muramoyl-L-alanyl-gamma-D-glutamyl-meso-2,6-diaminopimeloyl-D-alanyl-D-alanine + di-trans,octa-cis-undecaprenyl phosphate = di-trans,octa-cis-undecaprenyl diphospho-N-acetyl-alpha-D-muramoyl-L-alanyl-D-glutamyl-meso-2,6-diaminopimeloyl-D-alanyl-D-alanine + UMP. It functions in the pathway cell wall biogenesis; peptidoglycan biosynthesis. Functionally, catalyzes the initial step of the lipid cycle reactions in the biosynthesis of the cell wall peptidoglycan: transfers peptidoglycan precursor phospho-MurNAc-pentapeptide from UDP-MurNAc-pentapeptide onto the lipid carrier undecaprenyl phosphate, yielding undecaprenyl-pyrophosphoryl-MurNAc-pentapeptide, known as lipid I. This Dictyoglomus turgidum (strain DSM 6724 / Z-1310) protein is Phospho-N-acetylmuramoyl-pentapeptide-transferase.